Here is a 212-residue protein sequence, read N- to C-terminus: Protein FAM177A1 (212 aa).

Residue M1 is modified to N-acetylmethionine. The segment covering 1 to 11 (MEGEPASREEG) has biased composition (basic and acidic residues). The interval 1–33 (MEGEPASREEGEAVNASGAAAASAFRESAQQMS) is disordered. Low complexity predominate over residues 13–29 (AVNASGAAAASAFRESA). S69 carries the phosphoserine modification. At T70 the chain carries Phosphothreonine. Positions 135-172 (IDEYYRMKKEEEEEEEENRMSEEAERQYQQNKLQADSV) form a coiled coil. A disordered region spans residues 146–179 (EEEEEENRMSEEAERQYQQNKLQADSVVQSDQPE). The span at 161–179 (QYQQNKLQADSVVQSDQPE) shows a compositional bias: polar residues.

The protein belongs to the FAM177 family.

In Bos taurus (Bovine), this protein is Protein FAM177A1 (FAM177A1).